Consider the following 351-residue polypeptide: Photosystem II D2 protein (351 aa).

The helical transmembrane segment at 39–59 (TAYLAAGGWFTGTTFVTSWYT) threads the bilayer. Residue H116 participates in chlorophyll a binding. Residues 123-139 (GFCLRQFEIARLVGIRP) form a helical membrane-spanning segment. Pheophytin a is bound by residues Q128 and N141. A helical membrane pass occupies residues 151-164 (VFVSVFLLYPLGQA). H196 provides a ligand contact to chlorophyll a. The chain crosses the membrane as a helical span at residues 206–226 (GALLCAIHGATVENTLFEDGD). The a plastoquinone site is built by H213 and F260. H213 contributes to the Fe cation binding site. H267 provides a ligand contact to Fe cation. A helical membrane pass occupies residues 277 to 293 (GLWTSSIGIVGLALNLR).

Belongs to the reaction center PufL/M/PsbA/D family. In terms of assembly, PSII is composed of 1 copy each of membrane proteins PsbA, PsbB, PsbC, PsbD, PsbE, PsbF, PsbH, PsbI, PsbJ, PsbK, PsbL, PsbM, PsbT, PsbX, PsbY, PsbZ, Psb30/Ycf12, at least 3 peripheral proteins of the oxygen-evolving complex and a large number of cofactors. It forms dimeric complexes. The D1/D2 heterodimer binds P680, chlorophylls that are the primary electron donor of PSII, and subsequent electron acceptors. It shares a non-heme iron and each subunit binds pheophytin, quinone, additional chlorophylls, carotenoids and lipids. There is also a Cl(-1) ion associated with D1 and D2, which is required for oxygen evolution. The PSII complex binds additional chlorophylls, carotenoids and specific lipids. is required as a cofactor.

It localises to the plastid. The protein localises to the chloroplast thylakoid membrane. The enzyme catalyses 2 a plastoquinone + 4 hnu + 2 H2O = 2 a plastoquinol + O2. Photosystem II (PSII) is a light-driven water:plastoquinone oxidoreductase that uses light energy to abstract electrons from H(2)O, generating O(2) and a proton gradient subsequently used for ATP formation. It consists of a core antenna complex that captures photons, and an electron transfer chain that converts photonic excitation into a charge separation. The D1/D2 (PsbA/PsbD) reaction center heterodimer binds P680, the primary electron donor of PSII as well as several subsequent electron acceptors. D2 is needed for assembly of a stable PSII complex. The polypeptide is Photosystem II D2 protein (Thalassiosira pseudonana (Marine diatom)).